Consider the following 794-residue polypeptide: Copper-exporting P-type ATPase (794 aa).

2 consecutive HMA domains span residues Thr4–Ala69 and Glu71–Glu137. 4 residues coordinate Cu(+): Cys15, Cys18, Cys82, and Cys85. The next 6 membrane-spanning stretches (helical) occupy residues Ile161–Ile181, Ile186–Trp206, Val225–Trp245, Leu255–Ala275, Tyr410–Val430, and Pro437–Ala457. Catalysis depends on Asp494, which acts as the 4-aspartylphosphate intermediate. Residues Asp689 and Asp693 each coordinate Mg(2+). 2 consecutive transmembrane segments (helical) span residues Leu747–Ala767 and Ala773–Leu789.

This sequence belongs to the cation transport ATPase (P-type) (TC 3.A.3) family. Type IB subfamily.

Its subcellular location is the cell membrane. It catalyses the reaction Cu(+)(in) + ATP + H2O = Cu(+)(out) + ADP + phosphate + H(+). Functionally, involved in copper export. This chain is Copper-exporting P-type ATPase (copA), found in Staphylococcus epidermidis (strain ATCC 35984 / DSM 28319 / BCRC 17069 / CCUG 31568 / BM 3577 / RP62A).